The following is a 179-amino-acid chain: DELTA-actitoxin-Afr1a (179 aa).

The tract at residues Ser-1 to Val-29 is N-terminal alpha-helix that contributes to the pore. Residue Arg-31 coordinates an N-(acyl)-sphingosylphosphocholine. N-acetyl-D-glucosamine 6-sulfate is bound by residues Tyr-51 and Arg-53. Positions 53, 54, 79, 85, 108, 113, 114, 116, 133, 137, 138, 144, and 168 each coordinate an N-(acyl)-sphingosylphosphocholine. The interval Ser-105 to Arg-120 is trp-rich region, which is important for the binding to lipid membrane. Residue Tyr-138 participates in N-acetyl-D-glucosamine 6-sulfate binding. A Cell attachment site, crucial for protein stability motif is present at residues Arg-144–Asp-146.

Belongs to the actinoporin family. Sea anemone subfamily. In terms of assembly, octamer or nonamer in membranes. Monomer in the soluble state.

The protein resides in the secreted. It localises to the nematocyst. It is found in the target cell membrane. Functionally, pore-forming toxin (PFT) that consists of a crown-shaped octamer or nonamer that forms cation-selective hydrophilic pores of about 1.5 nm (inside) and 13 nm (outside). It causes cardiac stimulation and cytolysis (EC(50)=1.6 nM on erythrocytes). Interestingly, the Phe-16 is crucial for hemolysis. Pore formation is a multi-step process that involves specific recognition of membrane sphingomyelin (but neither cholesterol nor phosphatidylcholine) using aromatic rich region and adjacent phosphocholine (POC) binding site, firm binding to the membrane (mainly driven by hydrophobic interactions) accompanied by the transfer of the N-terminal region to the lipid-water interface and finally pore formation after oligomerization of monomers. It is probable that a dimeric form is an assembly intermediate before the complete oligomerization. The formation of stable pores occurs only in vesicles composed of DOPC/SM (there is no oligomerization when the PFT is treated with vesicles of DOPC or SM alone). The transmembrane pore displays 8 lateral perforations, one at each subunit-subunit interface, partially occupied by the acyl-chain region of a bridging lipid. Each pore contains 24 lipid molecules, firmly bound to each subunit, that is, 3 lipids (L1, L2, L3, L4 and/or L5) are associated to each subunit. Lipid L1 bridges 2 subunits, whereas lipids L2 and L3 bind to sites at single subunit. This chain is DELTA-actitoxin-Afr1a, found in Actinia fragacea (Strawberry anemone).